The sequence spans 742 residues: Condensin complex subunit 2 (742 aa).

Disordered stretches follow at residues 1–62, 151–172, 452–473, and 564–604; these read MKRA…FNSS, QQTE…KKER, FNSS…STER, and IQPH…PSSS. Over residues 21–39 the composition is skewed to basic and acidic residues; it reads ALEKKRAKENSRKQRELRR. A compositionally biased stretch (polar residues) spans 53–62; it reads LNNSSPFNSS. Residues 154 to 165 show a composition bias toward acidic residues; that stretch reads EEGEDAENDDED. Composition is skewed to polar residues over residues 452 to 470 and 592 to 604; these read FNSS…SLSS and PKQT…PSSS.

This sequence belongs to the CND2 (condensin subunit 2) family. In terms of assembly, component of the condensin complex, which contains the cut14/smc2 and cut3/smc2 heterodimer, and three non SMC subunits that probably regulate the complex: cnd1, cnd2 and cnd3.

It is found in the nucleus. Its subcellular location is the cytoplasm. The protein localises to the chromosome. In terms of biological role, regulatory subunit of the condensin complex, a complex required for conversion of interphase chromatin into mitotic-like condense chromosomes. The condensin complex probably introduces positive supercoils into relaxed DNA in the presence of type I topoisomerases and converts nicked DNA into positive knotted forms in the presence of type II topoisomerases. The condensin complex probably also plays a role during interphase in processes such as DNA repair. The chain is Condensin complex subunit 2 (cnd2) from Schizosaccharomyces pombe (strain 972 / ATCC 24843) (Fission yeast).